The sequence spans 309 residues: Thiamine-monophosphate kinase (309 aa).

2 residues coordinate Mg(2+): Asp41 and Asp55. His62 lines the substrate pocket. Residues Asp83, Asp128, and Asp215 each contribute to the Mg(2+) site. 127–128 (GD) contacts ATP. An ATP-binding site is contributed by Ser217. Asp218 lines the Mg(2+) pocket. Glu268 contributes to the substrate binding site.

The protein belongs to the thiamine-monophosphate kinase family.

It catalyses the reaction thiamine phosphate + ATP = thiamine diphosphate + ADP. It participates in cofactor biosynthesis; thiamine diphosphate biosynthesis; thiamine diphosphate from thiamine phosphate: step 1/1. Functionally, catalyzes the ATP-dependent phosphorylation of thiamine-monophosphate (TMP) to form thiamine-pyrophosphate (TPP), the active form of vitamin B1. In Methanopyrus kandleri (strain AV19 / DSM 6324 / JCM 9639 / NBRC 100938), this protein is Thiamine-monophosphate kinase.